Here is a 688-residue protein sequence, read N- to C-terminus: Sialic acid-binding Ig-like lectin 10 (688 aa).

The N-terminal stretch at 1–17 (MSLLLFLLSFLLDGPQG) is a signal peptide. Topologically, residues 18-543 (QMESYFLQVQ…DKDSATAFSK (526 aa)) are extracellular. The Ig-like V-type domain occupies 26-138 (VQRIVKAQEG…SFKEEFRLQV (113 aa)). Disulfide bonds link cysteine 37-cysteine 172, cysteine 42-cysteine 102, and cysteine 163-cysteine 214. Arginine 120 contributes to the N-acetylneuraminate binding site. The 84-residue stretch at 145–228 (PDIFIPEVLE…SRMSTQRTVR (84 aa)) folds into the Ig-like C2-type 1 domain. 2 N-linked (GlcNAc...) asparagine glycosylation sites follow: asparagine 195 and asparagine 246. Ig-like C2-type domains follow at residues 250–334 (PDLH…LDLS) and 339–436 (PQDL…LSLS). 2 disulfides stabilise this stretch: cysteine 271/cysteine 318 and cysteine 375/cysteine 420. The chain crosses the membrane as a helical span at residues 544–564 (GAVLGFGITALLALCLIVVIV). Over 565–688 (KTLQKKGTQE…YSDYTEVRVH (124 aa)) the chain is Cytoplasmic. The ITIM motif 1 motif lies at 588–593 (LDYINV). Residues 602–656 (RNWKAEPDAPSRSSPLDTHFPKPKKKQKDPHFTYPGCPDPTSSSQVPVSENNPEE) are disordered. A compositionally biased stretch (polar residues) spans 641 to 652 (PTSSSQVPVSEN). An ITIM motif 2 motif is present at residues 657-662 (LHYAAL). Tyrosine 659 is subject to Phosphotyrosine.

It belongs to the immunoglobulin superfamily. SIGLEC (sialic acid binding Ig-like lectin) family. Interacts with PTPN6/SHP-1 upon phosphorylation. Interacts with NCF1. Interacts with CD24; the probable CD24:SIGLEC10 complex is proposed to inhibit HGMB1-mediated tissue damage immune response. Interacts with HMGB1; the interaction is dependent on CD24. Associates with membrane IgM on the B cell surface. Interacts with RIGI, CBL and PTPN11. Post-translationally, phosphorylation of Tyr-659 is involved in binding to PTPN6. As to expression, expressed in B cells with high levels in pre-B cells and B1a cells of the peritoneal cavity.

The protein localises to the cell membrane. Its function is as follows. Putative adhesion molecule that mediates sialic-acid dependent binding to cells. Preferentially binds to alpha-2,3- or alpha-2,6-linked sialic acid. The sialic acid recognition site may be masked by cis interactions with sialic acids on the same cell surface. In the immune response, seems to act as an inhibitory receptor upon ligand induced tyrosine phosphorylation by recruiting cytoplasmic phosphatase(s) via their SH2 domain(s) that block signal transduction through dephosphorylation of signaling molecules. Involved in negative regulation of B-cell antigen receptor signaling and specifically acts on B1 cells to inhibit Ca(2+) signaling, cellular expansion and antibody secretion. The inhibition of B cell activation is dependent on PTPN6/SHP-1. In association with CD24 may be involved in the selective suppression of the immune response to danger-associated molecular patterns (DAMPs) such as HMGB1, HSP70 and HSP90. In association with CD24 may regulate the immune repsonse of natural killer (NK) cells. Plays a role in the control of autoimmunity. During initiation of adaptive immune responses by CD8-alpha(+) dendritic cells inhibits cross-presentation by impairing the formation of MHC class I-peptide complexes. The function seems to implicate recruitment of PTPN6/SHP-1, which dephosphorylates NCF1 of the NADPH oxidase complex consequently promoting phagosomal acidification. (Microbial infection) During infection by RNA viruses inhibits RIG-I signaling in macrophages by promoting its CBL-dependent ubiquitination and degradation via PTPN11/SHP-2. This Mus musculus (Mouse) protein is Sialic acid-binding Ig-like lectin 10 (Siglec10).